We begin with the raw amino-acid sequence, 1120 residues long: Vacuolar cation-chloride cotransporter 1 (1120 aa).

Positions 1–21 (MVSRFYQIPGTHRPSSAISSS) are disordered. Over 1–62 (MVSRFYQIPG…YDPDNPNKDK (62 aa)) the chain is Cytoplasmic. Ser-34 is modified (phosphoserine). The helical transmembrane segment at 63 to 83 (LGTYDGVFVPTALNVLSILMF) threads the bilayer. The Vacuolar portion of the chain corresponds to 84–85 (LR). A helical transmembrane segment spans residues 86 to 106 (FGFILGQLGIICTIGLLLLSY). Topologically, residues 107–145 (TINLLTTLSISAISTNGTVRGGGAYYMISRSLGPEFGGS) are cytoplasmic. Residues 146 to 166 (IGLVFFLGQVFNAGMNAVGII) form a helical membrane-spanning segment. At 167 to 193 (EPLLYNLGYSAQGEPPAALGELLPRGH) the chain is on the vacuolar side. A helical membrane pass occupies residues 194–214 (WHEFTYATVILFLCFSVAFVG). Residues 215–221 (SQTVSRA) lie on the Cytoplasmic side of the membrane. Residues 222 to 242 (GNILFLVLAASIFSIPLSALI) form a helical membrane-spanning segment. At 243–283 (RSPFTEGGISYTGPSWQTFHDNLLPHLTKGAAGSLLKGKET) the chain is on the vacuolar side. The helical transmembrane segment at 284–304 (FNDLFGVFFPATAGIFAGAGM) threads the bilayer. Residues 305 to 317 (SSELRKPSKSIPK) are Cytoplasmic-facing. Residues 318–338 (GTLWGLLFTFICYAVVVFSMG) form a helical membrane-spanning segment. Over 339 to 360 (CSIPRRSLYDEVQIIQTISSVQ) the chain is Vacuolar. Residues 361–381 (WVIFMGEMATSLFSIIVGMLG) form a helical membrane-spanning segment. Over 382 to 393 (AAYVLEAIAKDN) the chain is Cytoplasmic. Residues 394–414 (IIPGLEIFAHSPLYSLIFTWI) traverse the membrane as a helical segment. Over 415–430 (LTQLCLFSDVNKIATF) the chain is Vacuolar. A helical transmembrane segment spans residues 431–451 (ITMTFLMTFVVMNLACFLLGI). Residues 452-462 (SSAPNFRPSFK) are Cytoplasmic-facing. Residues 463 to 482 (YFNRYTTAIGALLSVVAMLI) form a helical membrane-spanning segment. Residues 483-487 (VDGIS) are Vacuolar-facing. The helical transmembrane segment at 488 to 506 (ASVLFLAMILLFLFIHYFS) threads the bilayer. Over 507–1120 (PPKSWGDVSQ…SQTMTVTTAL (614 aa)) the chain is Cytoplasmic. Phosphoserine is present on residues Ser-654, Ser-915, and Ser-918.

The protein belongs to the SLC12A transporter family.

The protein resides in the vacuole membrane. Catalyzes the coordinated symport of chloride with potassium ions across the vacuolar membrane. Involved in vacuolar osmoregulation. This is Vacuolar cation-chloride cotransporter 1 from Saccharomyces cerevisiae (strain ATCC 204508 / S288c) (Baker's yeast).